We begin with the raw amino-acid sequence, 266 residues long: Putative carbamate hydrolase RutD (266 aa).

It belongs to the AB hydrolase superfamily. Hydrolase RutD family.

The enzyme catalyses carbamate + 2 H(+) = NH4(+) + CO2. In terms of biological role, involved in pyrimidine catabolism. May facilitate the hydrolysis of carbamate, a reaction that can also occur spontaneously. This Escherichia coli O150:H5 (strain SE15) protein is Putative carbamate hydrolase RutD.